The primary structure comprises 161 residues: MQDAITAVINSADVQGKYLDGAAMDKLKSYFASGELRVRAASVISANAATIVKEAVAKSLLYSDVTRPGGNMYTTRRYAACIRDLDYYLRYATYAMLAGDASILDERVLNGLKETYNSLGVPISSTVQAIQAIKEVTASLVGADAGKEMGVYLDYICSGLS.

An N4-methylasparagine modification is found at N71. A (2R,3E)-phycocyanobilin-binding site is contributed by C81.

The protein belongs to the phycobiliprotein family. In terms of assembly, heterodimer of an alpha and a beta chain. In terms of processing, contains one covalently linked phycocyanobilin chromophore.

The protein localises to the cellular thylakoid membrane. Functionally, light-harvesting photosynthetic bile pigment-protein from the phycobiliprotein complex. Allophycocyanin has a maximum absorption at approximately 650 nanometers. This chain is Allophycocyanin beta chain (apcB), found in Synechocystis sp. (strain ATCC 27184 / PCC 6803 / Kazusa).